Here is a 479-residue protein sequence, read N- to C-terminus: Calcium uniporter protein, mitochondrial (479 aa).

The transit peptide at 1–54 (MNHALRRATLGLSPGLRASRLQQSFAKHQIPAVYRCEAASTPLQRAFTTSRCFR) directs the protein to the mitochondrion. Residues 55 to 323 (QETAAESEKD…DTLAHQGAHR (269 aa)) lie on the Mitochondrial matrix side of the membrane. Disordered regions lie at residues 56-125 (ETAA…KGRL) and 206-238 (EADQ…HEGP). The stretch at 59–79 (AESEKDDAARREEQSERARKR) forms a coiled coil. Over residues 60-75 (ESEKDDAARREEQSER) the composition is skewed to basic and acidic residues. Polar residues predominate over residues 83 to 93 (NVTSGSSAQTL). Basic and acidic residues-rich tracts occupy residues 94-122 (ENDR…DMKK) and 206-224 (EADQ…KKDN). Residues 324–344 (LAQGGFAALAGWWGVVYYVTF) traverse the membrane as a helical segment. Residues 345 to 354 (HTQAGWDLVE) are Mitochondrial intermembrane-facing. A Selectivity filter motif is present at residues 350-358 (WDLVEPVTY). Glu354 is a Ca(2+) binding site. Residues 355-375 (PVTYLAGLTTVMGAYLWFLYI) form a helical membrane-spanning segment. Residues 376–479 (SRDLSYKAAM…GSSDKIKKKQ (104 aa)) lie on the Mitochondrial matrix side of the membrane. The segment covering 445–462 (KVLEEEKQGRDGTKVTEG) has biased composition (basic and acidic residues). Positions 445–479 (KVLEEEKQGRDGTKVTEGKDEDDGPGSSDKIKKKQ) are disordered.

Belongs to the MCU (TC 1.A.77) family. Homotetramer, assembles in a dimer or dimers configuration with two interfaces.

Its subcellular location is the mitochondrion inner membrane. The enzyme catalyses Ca(2+)(in) = Ca(2+)(out). Highly selective calcium channel localized to the inner mitochondrial membrane, which mediates calcium uptake into the mitochondrial matrix. Mitochondrial calcium homeostasis plays key roles in cellular physiology and regulates ATP production, cytoplasmic calcium signals and activation of cell death pathways. Sufficient to operate as a pore-forming channel without the need of calcium-sensor or auxiliary subunit. This Gibberella zeae (strain ATCC MYA-4620 / CBS 123657 / FGSC 9075 / NRRL 31084 / PH-1) (Wheat head blight fungus) protein is Calcium uniporter protein, mitochondrial.